The chain runs to 239 residues: Probable transcriptional regulatory protein BAA_0622 (239 aa).

It belongs to the TACO1 family. YeeN subfamily.

The protein localises to the cytoplasm. The sequence is that of Probable transcriptional regulatory protein BAA_0622 from Bacillus anthracis (strain A0248).